The chain runs to 354 residues: Rhodopsin (354 aa).

Residues 1–36 (MNGTEGPYFYIPMLNTTGVVRSPYEYPQYYLVNPAA) are Extracellular-facing. N-linked (GlcNAc...) asparagine glycosylation is found at Asn-2 and Asn-15. A helical membrane pass occupies residues 37-61 (YAVLGAYMFFLILVGFPINFLTLYV). At 62–73 (TIEHKKLRTPLN) the chain is on the cytoplasmic side. A helical membrane pass occupies residues 74–96 (YILLNLAVADLFMVFGGFTTTIY). Over 97 to 110 (TSMHGYFVLGRLGC) the chain is Extracellular. Cys-110 and Cys-187 are oxidised to a cystine. A helical membrane pass occupies residues 111-133 (NVEGFSATLGGEIALWSLVVLAI). The 'Ionic lock' involved in activated form stabilization motif lies at 134–136 (ERW). The Cytoplasmic portion of the chain corresponds to 134-152 (ERWVVVCKPISNFRFGENH). Residues 153–173 (AIMGVAFTWFMAAACAVPPLF) form a helical membrane-spanning segment. The Extracellular portion of the chain corresponds to 174–202 (GWSRYIPEGMQCSCGIDYYTRAEGFNNES). Asn-200 is a glycosylation site (N-linked (GlcNAc...) asparagine). A helical transmembrane segment spans residues 203–224 (FVIYMFTCHFCIPLMVVFFCYG). Residues 225 to 252 (RLVCAVKEAAAAQQESETTQRAEREVTR) lie on the Cytoplasmic side of the membrane. The chain crosses the membrane as a helical span at residues 253–274 (MVIIMVVSFLVSWVPYASVAWY). At 275 to 286 (IFTHQGSEFGPL) the chain is on the extracellular side. A helical membrane pass occupies residues 287-308 (FMTIPAFFAKSSSIYNPMIYIC). Lys-296 is modified (N6-(retinylidene)lysine). Residues 309–354 (MNKQFRHCMITTLCCGKNPFEEEEGASSTASKTEASSVSSSSVSPA) are Cytoplasmic-facing. Residues Cys-322 and Cys-323 are each lipidated (S-palmitoyl cysteine). The segment at 329–354 (EEEEGASSTASKTEASSVSSSSVSPA) is disordered. Residues 334–354 (ASSTASKTEASSVSSSSVSPA) show a composition bias toward low complexity.

This sequence belongs to the G-protein coupled receptor 1 family. Opsin subfamily. In terms of processing, phosphorylated on some or all of the serine and threonine residues present in the C-terminal region. Post-translationally, contains one covalently linked retinal chromophore.

The protein resides in the membrane. It localises to the cell projection. It is found in the cilium. Its subcellular location is the photoreceptor outer segment. Functionally, photoreceptor required for image-forming vision at low light intensity. While most salt water fish species use retinal as chromophore, most freshwater fish use 3-dehydroretinal, or a mixture of retinal and 3-dehydroretinal. Light-induced isomerization of 11-cis to all-trans retinal triggers a conformational change that activates signaling via G-proteins. Subsequent receptor phosphorylation mediates displacement of the bound G-protein alpha subunit by arrestin and terminates signaling. In Atherina boyeri (Big-scale sand smelt), this protein is Rhodopsin (rho).